We begin with the raw amino-acid sequence, 216 residues long: UPF0502 protein VPA1223 (216 aa).

It belongs to the UPF0502 family.

This Vibrio parahaemolyticus serotype O3:K6 (strain RIMD 2210633) protein is UPF0502 protein VPA1223.